Here is a 388-residue protein sequence, read N- to C-terminus: Gastricsin (388 aa).

The N-terminal stretch at M1–A16 is a signal peptide. A propeptide spans A17–L59 (activation peptide). Residues Y73 to A385 form the Peptidase A1 domain. D91 is a catalytic residue. Intrachain disulfides connect C104–C109 and C267–C271. The active site involves D276. A disulfide bridge connects residues C310 and C343.

Belongs to the peptidase A1 family.

It localises to the secreted. The enzyme catalyses More restricted specificity than pepsin A, but shows preferential cleavage at Tyr-|-Xaa bonds. High activity on hemoglobin.. Functionally, hydrolyzes a variety of proteins. In Homo sapiens (Human), this protein is Gastricsin (PGC).